The chain runs to 200 residues: Guanylyl cyclase-activating protein 2 (200 aa).

A lipid anchor (N-myristoyl glycine) is attached at glycine 2. EF-hand domains are found at residues 14–31, 53–88, 89–124, and 141–176; these read GEID…FVME, EASQ…VLRG, TLEH…IYQL, and TPEE…DKWV. 15 residues coordinate Ca(2+): aspartate 66, asparagine 68, aspartate 70, threonine 72, glutamate 77, aspartate 102, aspartate 104, asparagine 106, cysteine 108, glutamate 113, aspartate 154, asparagine 156, aspartate 158, glutamine 160, and glutamate 165.

In terms of processing, the N-terminus is blocked. As to expression, in the retina, it is expressed in cone and rod photoreceptor cells.

Its subcellular location is the cell membrane. The protein localises to the photoreceptor inner segment. The protein resides in the cell projection. It is found in the cilium. It localises to the photoreceptor outer segment. Its function is as follows. Stimulates two retinal guanylyl cyclases (GCs) GUCY2D and GUCY2F when free calcium ions concentration is low, and inhibits GUCY2D and GUCY2F when free calcium ions concentration is elevated. This Ca(2+)-sensitive regulation of GCs is a key event in recovery of the dark state of rod photoreceptors following light exposure. May be involved in cone photoreceptor response and recovery of response in bright light. In Homo sapiens (Human), this protein is Guanylyl cyclase-activating protein 2 (GUCA1B).